The sequence spans 637 residues: CD2-associated protein (637 aa).

Residues 1–59 (MVDYIVEYDYDAVHDDELTIRVGEIIRNVKKLQEEGWLEGELNGRRGMFPDNFVKEIKR) enclose the SH3 1; truncated domain. The interaction with ANLN and localization to the midbody stretch occupies residues 1 to 175 (MVDYIVEYDY…ESTEDGETHN (175 aa)). Lysine 58 is covalently cross-linked (Glycyl lysine isopeptide (Lys-Gly) (interchain with G-Cter in SUMO2)). Residues serine 80 and serine 86 each carry the phosphoserine modification. Positions 108–167 (TKKRQCKVLFDYSPQNEDELELIVGDVIDVIEEVEEGWWSGTLNNKLGLFPSNFVKELES) constitute an SH3 2 domain. Residues 166-177 (ESTEDGETHNAQ) are compositionally biased toward basic and acidic residues. The disordered stretch occupies residues 166–209 (ESTEDGETHNAQEESEVPLTGPTSPLPSPGNGSEPAPGSVAQPK). Phosphoserine is present on serine 224. A disordered region spans residues 226 to 254 (KLRTRTSSSETEEKKTEKPLILQPLGSRT). An SH3 3 domain is found at 269-330 (KAKEYCRTLF…PDNFAVQISE (62 aa)). Residues 333–455 (KDFPKPKKPP…KLDPEQLPVR (123 aa)) form a disordered region. 3 consecutive short sequence motifs (SH3-binding) follow at residues 336–352 (PKPKKPPPPAKGPAPKP), 378–397 (KPSKPAAPQVPPKKPTAPTK), and 410–422 (PKRPEKPVPPPPP). Positions 341–351 (PPPPAKGPAPK) are enriched in pro residues. Residues 356–379 (AAEKKAFPLKAEEKDEKSLLEQKP) are compositionally biased toward basic and acidic residues. The span at 437 to 449 (IDTEPVSKPKLDP) shows a compositional bias: basic and acidic residues. Phosphoserine is present on residues serine 458, serine 469, serine 510, and serine 514. A disordered region spans residues 488–555 (HLTANRPKMP…SLSTPSSASK (68 aa)). The segment covering 517–539 (KTLKLPKEDDSGNLKPLEFKKDA) has biased composition (basic and acidic residues). Residue lysine 523 forms a Glycyl lysine isopeptide (Lys-Gly) (interchain with G-Cter in SUMO2) linkage. Low complexity predominate over residues 540 to 555 (SYSSKSSLSTPSSASK). The residue at position 563 (threonine 563) is a Phosphothreonine. Residues 578 to 636 (RNSVDELRAQIIELLCIVDALKKDHGKELEKLRKELEEEKAMRSNLEVEIAKLKKAVLL) adopt a coiled-coil conformation. Serine 580 is subject to Phosphoserine.

Homodimer. Interacts with F-actin, PKD2, NPHS1 and NPHS2. Interacts with WTIP. Interacts with DDN; interaction is direct. Interacts (via SH3 2 domain) with CBL (via phosphorylated C-terminus). Interacts with BCAR1/p130Cas (via SH3 domain). Interacts with MVB12A and ARHGAP17. Interacts with ANLN, CD2 and CBLB. Interacts with PDCD6IP and TSG101. Interacts with RIN3. Interacts directly with RET (inactive) and CBLC; upon RET activation by GDNF suggested to dissociate from RET as CBLC:CD2AP complex. Interacts with CGNL1 and SH3BP1; probably part of a complex at cell junctions. Interacts with CAPZA1. Phosphorylated on tyrosine residues; probably by c-Abl, Fyn and c-Src. Expressed in podocytes (at protein level).

It localises to the cytoplasm. The protein localises to the cytoskeleton. Its subcellular location is the cell projection. The protein resides in the ruffle. It is found in the cell junction. Seems to act as an adapter protein between membrane proteins and the actin cytoskeleton. In collaboration with CBLC, modulates the rate of RET turnover and may act as regulatory checkpoint that limits the potency of GDNF on neuronal survival. Controls CBLC function, converting it from an inhibitor to a promoter of RET degradation. May play a role in receptor clustering and cytoskeletal polarity in the junction between T-cell and antigen-presenting cell. May anchor the podocyte slit diaphragm to the actin cytoskeleton in renal glomerolus. Also required for cytokinesis. Plays a role in epithelial cell junctions formation. The chain is CD2-associated protein (Cd2ap) from Mus musculus (Mouse).